A 286-amino-acid chain; its full sequence is Putative short-chain type dehydrogenase/reductase Rv0148 (286 aa).

11–35 (VTGAGGGLGREYALTLAGEGASVVV) contributes to the NAD(+) binding site. Ser-151 is a binding site for substrate. The active-site Proton acceptor is Tyr-164. Residue Lys-280 forms an Isoglutamyl lysine isopeptide (Lys-Gln) (interchain with Q-Cter in protein Pup) linkage.

This sequence belongs to the short-chain dehydrogenases/reductases (SDR) family. In terms of processing, pupylated at Lys-280 by the prokaryotic ubiquitin-like protein Pup, which probably leads to its degradation by the proteasome.

The sequence is that of Putative short-chain type dehydrogenase/reductase Rv0148 from Mycobacterium tuberculosis (strain ATCC 25618 / H37Rv).